A 1161-amino-acid polypeptide reads, in one-letter code: Nuclear receptor-interacting protein 1 (1161 aa).

An interaction with ZNF366 region spans residues Met-1–Asp-416. Positions Leu-21–Leu-25 match the LXXLL motif 1 motif. Residues Gly-34 to Val-68 form a disordered region. Over residues Asn-50–Val-68 the composition is skewed to polar residues. The tract at residues Met-78–Ala-335 is repression domain 1. Ser-104 is subject to Phosphoserine. Lys-111 is modified (N6-acetyllysine; alternate). A Glycyl lysine isopeptide (Lys-Gly) (interchain with G-Cter in SUMO2); alternate cross-link involves residue Lys-111. Positions Leu-133 to Leu-137 match the LXXLL motif 2 motif. Lys-158 is subject to N6-acetyllysine. Residue Lys-170 forms a Glycyl lysine isopeptide (Lys-Gly) (interchain with G-Cter in SUMO2) linkage. An LXXLL motif 3 motif is present at residues Leu-185–Leu-189. Glycyl lysine isopeptide (Lys-Gly) (interchain with G-Cter in SUMO2) cross-links involve residues Lys-195 and Lys-198. Position 207 is a phosphothreonine (Thr-207). Ser-218 is subject to Phosphoserine. An LXXLL motif 4 motif is present at residues Leu-267 to Leu-271. N6-acetyllysine occurs at positions 287 and 311. At Ser-358 the chain carries Phosphoserine. Lys-374 participates in a covalent cross-link: Glycyl lysine isopeptide (Lys-Gly) (interchain with G-Cter in SUMO2). Ser-380 carries the post-translational modification Phosphoserine. The short motif at Leu-382–Leu-386 is the LXXLL motif 5 element. Residues Thr-393–Tyr-436 are disordered. The tract at residues Thr-411–Gly-701 is repression domain 2. Residues Asp-432 to Asp-473 are required for targeting to small nuclear foci. Residues Pro-441–Lys-447 carry the CTBP-binding; principal site motif. Lys-447 and Lys-482 each carry N6-acetyllysine. Residue Ser-488 is modified to Phosphoserine. The LXXLL motif 6 motif lies at Leu-501–Leu-505. Lys-509 participates in a covalent cross-link: Glycyl lysine isopeptide (Lys-Gly) (interchain with G-Cter in SUMO2). The span at Asn-517–Val-552 shows a compositional bias: polar residues. The segment at Asn-517–Thr-559 is disordered. A Phosphoserine modification is found at Ser-519. Lys-529 bears the N6-acetyllysine mark. Phosphoserine is present on residues Ser-531, Ser-543, and Ser-565. A CTBP-binding motif is present at residues Pro-566 to Ser-570. Disordered stretches follow at residues Thr-604 to Ser-623, Gly-639 to Cys-702, and Leu-717 to Ala-747. Residue Lys-607 is modified to N6-acetyllysine. The residue at position 672 (Ser-672) is a Phosphoserine. Positions Leu-714 to Leu-718 match the LXXLL motif 7 motif. The span at Gly-724 to Ala-747 shows a compositional bias: basic and acidic residues. Positions Asp-736 to Ser-886 are repression domain 3. An interaction with ZNF366 region spans residues Val-754–Glu-1161. Residues Lys-757 and Lys-803 each participate in a glycyl lysine isopeptide (Lys-Gly) (interchain with G-Cter in SUMO2) cross-link. Ser-808 is modified (phosphoserine). The LXXLL motif 8 motif lies at Leu-820 to Leu-824. A disordered region spans residues Glu-829 to Leu-848. Residues Lys-851 and Lys-902 each participate in a glycyl lysine isopeptide (Lys-Gly) (interchain with G-Cter in SUMO2) cross-link. Residue Lys-932 is modified to N6-acetyllysine; alternate. Residue Lys-932 forms a Glycyl lysine isopeptide (Lys-Gly) (interchain with G-Cter in SUMO2); alternate linkage. An LXXLL motif 9 motif is present at residues Leu-937–Leu-941. The CTBP-binding signature appears at Val-947–Ser-951. Residues Leu-950–Lys-962 are compositionally biased toward basic and acidic residues. The segment at Leu-950–Glu-976 is disordered. Ser-1003 bears the Phosphoserine mark. Positions Leu-1063–Lys-1076 are ligand-dependent nuclear receptor binding. Glycyl lysine isopeptide (Lys-Gly) (interchain with G-Cter in SUMO2) cross-links involve residues Lys-1108, Lys-1118, and Lys-1157. A repression domain 4 region spans residues Phe-1121–Glu-1161.

As to quaternary structure, interacts with CTBP1, CTBP2, ERS1, HDAC1, HDAC2, HDAC5, HDAC6, NR2C2, NR3C1, NR3C2, YWHAH, JUN and FOS. Found in a complex with both NR3C1 and YWHAH. Interacts with NR2C1 (sumoylated form and via the ligand-binding domain); the interaction results in promoting the repressor activity of NR2C1. Interacts with RARA and RXRB homodimers and RARA/RXRB heterodimers in the presence of ligand. Interacts with HDAC1 and HDAC3 via its N-terminal domain. Interacts with ZNF366. Interacts with RORA. Post-translationally, acetylation abolishes interaction with CTBP1. Phosphorylation enhances interaction with YWHAH. Acetylation regulates its nuclear translocation and corepressive activity. Expressed in the embryonic placenta. In the adult, expression is strong in the testis and brain. Also expressed at a high level in the white adipose tissue. Expressed constantly but at a weaker level in the adult heart, lung, stomach and kidney. Expressed moderately in the skeletal muscle. Expressed at a low level in the adult spleen, liver and brown adipose tissue. Expressed in the ovary at a high level in granulosa cells and at a lower level in the thecal and interstitial compartments.

Its subcellular location is the nucleus. Its function is as follows. Modulates transcriptional repression by nuclear hormone receptors such as NR2C1, thyroid hormone receptor and retinoic acid receptor/RARA. Essential for cumulus expansion and follicle rupture during ovulation. Also controls the balance between fat accumulation and energy expenditure. Positive regulator of the circadian clock gene expression: stimulates transcription of BMAL1, CLOCK and CRY1 by acting as a coactivator for RORA and RORC. Involved in the regulation of ovarian function. Plays a role in renal development. The polypeptide is Nuclear receptor-interacting protein 1 (Mus musculus (Mouse)).